A 179-amino-acid polypeptide reads, in one-letter code: Large ribosomal subunit protein uL6c (179 aa).

Belongs to the universal ribosomal protein uL6 family. In terms of assembly, part of the 50S ribosomal subunit.

It localises to the plastid. The protein localises to the chloroplast. Its function is as follows. Binds 23S rRNA. The chain is Large ribosomal subunit protein uL6c (rpl6) from Guillardia theta (Cryptophyte).